The sequence spans 482 residues: Sugar transporter ERD6-like 16 (482 aa).

12 helical membrane-spanning segments follow: residues 42-62, 80-100, 117-137, 142-162, 173-193, 197-217, 280-300, 316-336, 344-364, 382-402, 413-433, and 443-463; these read LMVL…GSCV, LAEF…GAVM, SACF…ALLL, FFTG…IAEI, TLNQ…GSLI, TLAL…CFIP, VIIG…GIGF, LGTI…TILI, LIMI…TSFL, GVLI…WVIM, IAGS…SYTF, and GTFY…AKMV.

This sequence belongs to the major facilitator superfamily. Sugar transporter (TC 2.A.1.1) family.

The protein resides in the membrane. Its function is as follows. Sugar transporter. In Arabidopsis thaliana (Mouse-ear cress), this protein is Sugar transporter ERD6-like 16.